The primary structure comprises 572 residues: Chaperonin CPN60-like 2, mitochondrial (572 aa).

The N-terminal 31 residues, 1 to 31, are a transit peptide targeting the mitochondrion; that stretch reads MYRVLSKLSSSIGSSTSRKLVSGRIISSRNY.

It belongs to the chaperonin (HSP60) family.

It is found in the mitochondrion. Functionally, implicated in mitochondrial protein import and macromolecular assembly. May facilitate the correct folding of imported proteins. May also prevent misfolding and promote the refolding and proper assembly of unfolded polypeptides generated under stress conditions in the mitochondrial matrix. The protein is Chaperonin CPN60-like 2, mitochondrial of Arabidopsis thaliana (Mouse-ear cress).